Here is a 1250-residue protein sequence, read N- to C-terminus: DNA topoisomerase 3-alpha (1250 aa).

In terms of domain architecture, Toprim spans 27–171 (KYLNVAEKND…NISVYRATFS (145 aa)). The Topo IA-type catalytic domain occupies 189 to 610 (DKRQSDAVDV…EQIAKYKQAY (422 aa)). Catalysis depends on tyrosine 356, which acts as the O-(5'-phospho-DNA)-tyrosine intermediate. Residues 769–835 (RGGGGGPGPG…GTGGGGLGGG (67 aa)) are compositionally biased toward gly residues. Disordered regions lie at residues 769–899 (RGGG…GLDE) and 953–1035 (NGGT…TVLC). Basic and acidic residues predominate over residues 840-865 (PGGESKKSATKKPPNEPKPKKTKEPK). Residues 866-886 (AAPNKKTSSKSSGSIRSFFTS) are compositionally biased toward low complexity. Polar residues predominate over residues 956–965 (TMPTESNGDQ). 2 stretches are compositionally biased toward basic and acidic residues: residues 966-994 (QLDKSLSEWIKEQDKADERPMLWGTRERA) and 1012-1021 (PRWDSVERDS). The segment covering 1022–1033 (TPPSSVPESETV) has biased composition (low complexity). 4 residues coordinate Zn(2+): cysteine 1035, cysteine 1038, cysteine 1061, and cysteine 1067. Residues 1035-1076 (CTGCQQPARQNTVRKNGPNLGRLYYKCPKPDECNFFQWADEP) form a GRF-type 1 zinc finger. Residues 1069-1150 (FFQWADEPPS…TATPGDGEEV (82 aa)) form a disordered region. Residues 1079–1101 (SAKSKNSTGSAPQSTTSWGSNRV) show a composition bias toward polar residues. Positions 1106-1134 (SIQQSNSQRGQSSMRSNSSSTVTITQTKT) are enriched in low complexity. 4 residues coordinate Zn(2+): cysteine 1152, cysteine 1154, cysteine 1177, and cysteine 1184. The segment at 1152–1193 (CNCGQLASQLTVRKDGPNQGRPFYACPTREKSCGFFKWGDED) adopts a GRF-type 2 zinc-finger fold. The interval 1188–1231 (KWGDEDQNQGASSTSWGSANRNPPGRSQPTAITSDGPKTRRCGL) is disordered. Residues 1195 to 1220 (NQGASSTSWGSANRNPPGRSQPTAIT) show a composition bias toward polar residues.

It belongs to the type IA topoisomerase family.

The catalysed reaction is ATP-independent breakage of single-stranded DNA, followed by passage and rejoining.. Its function is as follows. Releases the supercoiling and torsional tension of DNA introduced during the DNA replication and transcription by transiently cleaving and rejoining one strand of the DNA duplex. Introduces a single-strand break via transesterification at a target site in duplex DNA. The scissile phosphodiester is attacked by the catalytic tyrosine of the enzyme, resulting in the formation of a DNA-(5'-phosphotyrosyl)-enzyme intermediate and the expulsion of a 3'-OH DNA strand. The free DNA strand than undergoes passage around the unbroken strand thus removing DNA supercoils. Finally, in the religation step, the DNA 3'-OH attacks the covalent intermediate to expel the active-site tyrosine and restore the DNA phosphodiester backbone. Weakly relaxes negative supercoils and displays a distinct preference for binding single-stranded DNA. The chain is DNA topoisomerase 3-alpha (Top3alpha) from Drosophila melanogaster (Fruit fly).